Consider the following 307-residue polypeptide: Opsin-like protein carO (307 aa).

Residue Asn28 is glycosylated (N-linked (GlcNAc...) asparagine). 7 helical membrane passes run 36-56 (WYWAVCAVMTVSTFAFLGLGM), 64-84 (IFHYITAGITMIASIAYFTMA), 118-138 (WFLTTPLLLTDLLLTAGMPWP), 140-160 (VLWVILVDWVMIVTGLVGALV), 166-186 (WGYFAFGCAALAYIVYVLAWE), 202-222 (FVMCGSLTAVVWILYPIAWGV), and 235-255 (AVFYGILDLIAKPVFGALLLW). A disordered region spans residues 280–307 (GPNNKVASGHGARNDTATASGSNVNPNA). A glycan (N-linked (GlcNAc...) asparagine) is linked at Asn293. The segment covering 294–307 (DTATASGSNVNPNA) has biased composition (polar residues).

This sequence belongs to the archaeal/bacterial/fungal opsin family.

The protein resides in the membrane. In terms of biological role, opsin-like protein; part of the car gene cluster that mediates the biosynthesis of neurosporaxanthin, a carboxylic apocarotenoid acting as an essential protective pigment and leading to orange pigmentation. The exact role of carO in carotenoid biosynthesis is not known yet, but it could be involved in the regulation of the pathway by light or other stimuli. This Fusarium fujikuroi (Bakanae and foot rot disease fungus) protein is Opsin-like protein carO.